Consider the following 681-residue polypeptide: UvrABC system protein B (681 aa).

In terms of domain architecture, Helicase ATP-binding spans Gln-30–Pro-419. ATP is bound at residue Gly-43–Thr-50. The short motif at Tyr-96–Ile-119 is the Beta-hairpin element. The region spanning Gln-435 to Leu-601 is the Helicase C-terminal domain. One can recognise a UVR domain in the interval Tyr-641 to Val-676.

This sequence belongs to the UvrB family. As to quaternary structure, forms a heterotetramer with UvrA during the search for lesions. Interacts with UvrC in an incision complex.

The protein resides in the cytoplasm. The UvrABC repair system catalyzes the recognition and processing of DNA lesions. A damage recognition complex composed of 2 UvrA and 2 UvrB subunits scans DNA for abnormalities. Upon binding of the UvrA(2)B(2) complex to a putative damaged site, the DNA wraps around one UvrB monomer. DNA wrap is dependent on ATP binding by UvrB and probably causes local melting of the DNA helix, facilitating insertion of UvrB beta-hairpin between the DNA strands. Then UvrB probes one DNA strand for the presence of a lesion. If a lesion is found the UvrA subunits dissociate and the UvrB-DNA preincision complex is formed. This complex is subsequently bound by UvrC and the second UvrB is released. If no lesion is found, the DNA wraps around the other UvrB subunit that will check the other stand for damage. This chain is UvrABC system protein B, found in Chlorobium chlorochromatii (strain CaD3).